A 116-amino-acid polypeptide reads, in one-letter code: Large ribosomal subunit protein bL19 (116 aa).

Belongs to the bacterial ribosomal protein bL19 family.

Its function is as follows. This protein is located at the 30S-50S ribosomal subunit interface and may play a role in the structure and function of the aminoacyl-tRNA binding site. The chain is Large ribosomal subunit protein bL19 from Staphylococcus aureus (strain Mu3 / ATCC 700698).